The chain runs to 581 residues: Arginine--tRNA ligase (581 aa).

A 'HIGH' region motif is present at residues 123-133; that stretch reads PNVAKEMHVGH.

This sequence belongs to the class-I aminoacyl-tRNA synthetase family. Monomer.

The protein resides in the cytoplasm. It carries out the reaction tRNA(Arg) + L-arginine + ATP = L-arginyl-tRNA(Arg) + AMP + diphosphate. This is Arginine--tRNA ligase from Blochmanniella pennsylvanica (strain BPEN).